Here is a 278-residue protein sequence, read N- to C-terminus: Nucleotide-binding protein LHK_02029 (278 aa).

8–15 is a binding site for ATP; that stretch reads GLAGSGKS. Residue 57 to 60 coordinates GTP; that stretch reads DTRD.

This sequence belongs to the RapZ-like family.

In terms of biological role, displays ATPase and GTPase activities. In Laribacter hongkongensis (strain HLHK9), this protein is Nucleotide-binding protein LHK_02029.